An 871-amino-acid polypeptide reads, in one-letter code: Alanine--tRNA ligase (871 aa).

Residues His563, His567, Cys665, and His669 each contribute to the Zn(2+) site.

This sequence belongs to the class-II aminoacyl-tRNA synthetase family. The cofactor is Zn(2+).

It localises to the cytoplasm. It carries out the reaction tRNA(Ala) + L-alanine + ATP = L-alanyl-tRNA(Ala) + AMP + diphosphate. Catalyzes the attachment of alanine to tRNA(Ala) in a two-step reaction: alanine is first activated by ATP to form Ala-AMP and then transferred to the acceptor end of tRNA(Ala). Also edits incorrectly charged Ser-tRNA(Ala) and Gly-tRNA(Ala) via its editing domain. The chain is Alanine--tRNA ligase from Christiangramia forsetii (strain DSM 17595 / CGMCC 1.15422 / KT0803) (Gramella forsetii).